Reading from the N-terminus, the 427-residue chain is Adenylosuccinate synthetase (427 aa).

GTP-binding positions include 12–18 (GDEGKGK) and 40–42 (GHT). The active-site Proton acceptor is the Asp-13. Positions 13 and 40 each coordinate Mg(2+). Residues 13–16 (DEGK), 38–41 (NAGH), Thr-130, Arg-144, Gln-224, Thr-239, and Arg-303 contribute to the IMP site. His-41 (proton donor) is an active-site residue. 299-305 (SVTGRPR) serves as a coordination point for substrate. GTP-binding positions include Arg-305, 331–333 (KLD), and 411–413 (SVG).

It belongs to the adenylosuccinate synthetase family. As to quaternary structure, homodimer. The cofactor is Mg(2+).

It localises to the cytoplasm. It carries out the reaction IMP + L-aspartate + GTP = N(6)-(1,2-dicarboxyethyl)-AMP + GDP + phosphate + 2 H(+). Its pathway is purine metabolism; AMP biosynthesis via de novo pathway; AMP from IMP: step 1/2. In terms of biological role, plays an important role in the de novo pathway of purine nucleotide biosynthesis. Catalyzes the first committed step in the biosynthesis of AMP from IMP. This is Adenylosuccinate synthetase from Sorangium cellulosum (strain So ce56) (Polyangium cellulosum (strain So ce56)).